Here is a 1046-residue protein sequence, read N- to C-terminus: DNA-directed RNA polymerase subunit beta' (1046 aa).

Residues aspartate 383, aspartate 385, and aspartate 387 each contribute to the Mg(2+) site. Residues cysteine 752, cysteine 826, cysteine 833, and cysteine 836 each coordinate Zn(2+).

This sequence belongs to the RNA polymerase beta' chain family. In terms of assembly, the RNAP catalytic core consists of 2 alpha, 1 beta, 1 beta' and 1 omega subunit. When a sigma factor is associated with the core the holoenzyme is formed, which can initiate transcription. Requires Mg(2+) as cofactor. Zn(2+) serves as cofactor.

The catalysed reaction is RNA(n) + a ribonucleoside 5'-triphosphate = RNA(n+1) + diphosphate. In terms of biological role, DNA-dependent RNA polymerase catalyzes the transcription of DNA into RNA using the four ribonucleoside triphosphates as substrates. This is DNA-directed RNA polymerase subunit beta' from Weissella hellenica.